Here is a 232-residue protein sequence, read N- to C-terminus: RNA chaperone ProQ (232 aa).

Residues 105–182 (EAKARVQAQR…REEQHTPVSD (78 aa)) are disordered. A compositionally biased stretch (basic and acidic residues) spans 117-136 (QQAKKREAAAAAGEKEDAPR). Basic residues predominate over residues 137 to 146 (RERKPRPTTP). The segment covering 147-177 (RRKEGAERKPRSQKPVEKAPKTVKAPREEQH) has biased composition (basic and acidic residues).

This sequence belongs to the ProQ family.

It localises to the cytoplasm. Functionally, RNA chaperone with significant RNA binding, RNA strand exchange and RNA duplexing activities. May regulate ProP activity through an RNA-based, post-transcriptional mechanism. This is RNA chaperone ProQ from Escherichia coli (strain UTI89 / UPEC).